We begin with the raw amino-acid sequence, 344 residues long: tRNA N6-adenosine threonylcarbamoyltransferase (344 aa).

Fe cation contacts are provided by histidine 112 and histidine 116. Residues 135-139 (LVSGG), aspartate 168, glycine 181, and asparagine 271 contribute to the substrate site. Aspartate 299 is a Fe cation binding site. The tract at residues 323 to 344 (RARPRWPLDPEAEPVRGAGVKA) is disordered.

The protein belongs to the KAE1 / TsaD family. The cofactor is Fe(2+).

The protein localises to the cytoplasm. The catalysed reaction is L-threonylcarbamoyladenylate + adenosine(37) in tRNA = N(6)-L-threonylcarbamoyladenosine(37) in tRNA + AMP + H(+). Its function is as follows. Required for the formation of a threonylcarbamoyl group on adenosine at position 37 (t(6)A37) in tRNAs that read codons beginning with adenine. Is involved in the transfer of the threonylcarbamoyl moiety of threonylcarbamoyl-AMP (TC-AMP) to the N6 group of A37, together with TsaE and TsaB. TsaD likely plays a direct catalytic role in this reaction. The polypeptide is tRNA N6-adenosine threonylcarbamoyltransferase (Erythrobacter litoralis (strain HTCC2594)).